A 49-amino-acid polypeptide reads, in one-letter code: Large ribosomal subunit protein bL33 (49 aa).

It belongs to the bacterial ribosomal protein bL33 family.

The sequence is that of Large ribosomal subunit protein bL33 from Lacticaseibacillus casei (strain BL23) (Lactobacillus casei).